We begin with the raw amino-acid sequence, 765 residues long: AMP deaminase 3 (765 aa).

2 positions are modified to phosphoserine: serine 85 and serine 106. 2 residues coordinate Zn(2+): histidine 315 and histidine 317. Residues histidine 317 and 386-391 (KFNSKY) contribute to the substrate site. Zn(2+) is bound at residue histidine 584. Residue glutamate 587 coordinates substrate. Residue histidine 606 is the Proton acceptor of the active site. Zn(2+) is bound at residue aspartate 661. 662 to 665 (DPMQ) is a substrate binding site.

The protein belongs to the metallo-dependent hydrolases superfamily. Adenosine and AMP deaminases family. Homotetramer. The cofactor is Zn(2+). In terms of tissue distribution, expressed in adult tissues such as aorta, heart, kidney, lung, muscle and thyroid. Weakly expressed in thyroid and not detected in liver.

The catalysed reaction is AMP + H2O + H(+) = IMP + NH4(+). It functions in the pathway purine metabolism; IMP biosynthesis via salvage pathway; IMP from AMP: step 1/1. Functionally, AMP deaminase plays a critical role in energy metabolism. This is AMP deaminase 3 from Rattus norvegicus (Rat).